A 134-amino-acid chain; its full sequence is ATP synthase epsilon chain (134 aa).

It belongs to the ATPase epsilon chain family. F-type ATPases have 2 components, CF(1) - the catalytic core - and CF(0) - the membrane proton channel. CF(1) has five subunits: alpha(3), beta(3), gamma(1), delta(1), epsilon(1). CF(0) has three main subunits: a, b and c.

Its subcellular location is the cell membrane. Functionally, produces ATP from ADP in the presence of a proton gradient across the membrane. This is ATP synthase epsilon chain from Clostridium botulinum (strain Eklund 17B / Type B).